An 819-amino-acid polypeptide reads, in one-letter code: Eukaryotic translation initiation factor 3 subunit C (819 aa).

The disordered stretch occupies residues 1 to 106; sequence MSRFFLKTYE…DSSDEEDGKK (106 aa). Acidic residues-rich tracts occupy residues 17–41 and 47–59; these read GEEEDLLSQSEEDLVSSSSEEELSD and DSDESSDNDEDND. Positions 620–795 constitute a PCI domain; the sequence is FHQHINLDLI…EYIIFERGEE (176 aa).

This sequence belongs to the eIF-3 subunit C family. Component of the eukaryotic translation initiation factor 3 (eIF-3) complex.

Its subcellular location is the cytoplasm. Component of the eukaryotic translation initiation factor 3 (eIF-3) complex, which is involved in protein synthesis of a specialized repertoire of mRNAs and, together with other initiation factors, stimulates binding of mRNA and methionyl-tRNAi to the 40S ribosome. The eIF-3 complex specifically targets and initiates translation of a subset of mRNAs involved in cell proliferation. The protein is Eukaryotic translation initiation factor 3 subunit C of Kluyveromyces lactis (strain ATCC 8585 / CBS 2359 / DSM 70799 / NBRC 1267 / NRRL Y-1140 / WM37) (Yeast).